The sequence spans 454 residues: MSHKKVVAISESSSDEEVPVAPPTAPPKKRQRKAVEEPRGHQAMVEIARQATAALKARGDPGSIIVQTFCDQTVDVDKEGNVIFTPAKQKSICNKSGSPLASVASKIFKASEHKWQSAMEFALKVLNAYQVDHSKLTLLPDEGTLECFKKAVQAYITTSKMHVTYTFTNQKTFLHVAGRLLLDFVIKAAELAPGVNPSGCVVWQHGCQSSLMCLHGSPMIQKEQLVEMDVNSENAQRALKENPEKTKIVSNRWGRNVVQFKNEDAFCCSMDVNMSGGNFSGASCGMFYTDGPKAIMAFQQIMAFLKACYPSMPNAESHLLMPLKCECNWNSSLPLLGRQTCKITPFSLASASHIDKSEVDDQKMLATLNNPAMLVFQCCNPVYRNSKAAPQKNCDFKISSVDLVSCLQIAKQIWLSTVGERPPVKFPEFHWSDEHRYQTTILPQGQHDDDLVLF.

The interval 1–41 (MSHKKVVAISESSSDEEVPVAPPTAPPKKRQRKAVEEPRGH) is disordered. Tyr129 carries the phosphotyrosine; by host modification. Residues Cys213 and His215 each coordinate Zn(2+). The flexible loop stretch occupies residues 226–260 (VEMDVNSENAQRALKENPEKTKIVSNRWGRNVVQF). Zn(2+) is bound by residues Cys268, Cys284, Cys325, Cys327, Cys378, and Cys394. Residues 440–454 (TILPQGQHDDDLVLF) are C-terminal arm, DBP binding.

It belongs to the adenoviridae E2A DNA-binding protein family. In terms of assembly, homomultimerizes on viral ssDNA bound to pTP. Forms a initiation complex with viral polymerase, pTP and hosts NFIA and POU2F1/OCT1. Interacts with host SRCAP.

It localises to the host nucleus. Plays a role in the elongation phase of viral strand displacement replication by unwinding the template in an ATP-independent fashion, employing its capacity to form multimers. Also enhances the rate of initiation. Released from template upon second strand synthesis. Assembles in complex with viral pTP, viral pol, host NFIA and host POU2F1/OCT1 on viral origin of replication. Covers the whole ssDNA genome during synthesis. The complementary strand synthesis induces its relese from DNA template. May inhibit cellular transcription mediated by the interaction between host SRCAP and CBP. The polypeptide is DNA-binding protein (Canine adenovirus serotype 1 (strain CLL) (CAdV-1)).